The chain runs to 199 residues: Ribonuclease P protein subunit p25 (199 aa).

Residues Met-1–Glu-11 are compositionally biased toward basic and acidic residues. Disordered regions lie at residues Met-1–Leu-31 and Pro-146–Ala-199. Ser-172 carries the post-translational modification Phosphoserine. Over residues Pro-190–Ala-199 the composition is skewed to acidic residues.

The protein belongs to the histone-like Alba family. As to quaternary structure, component of nuclear RNase P and RNase MRP ribonucleoproteins. RNase P consists of a catalytic RNA moiety and 10 different protein chains; POP1, POP4, POP5, POP7, RPP14, RPP21, RPP25, RPP30, RPP38 and RPP40. Within the RNase P complex, POP1, POP7 and RPP25 form the 'finger' subcomplex, POP5, RPP14, RPP40 and homodimeric RPP30 form the 'palm' subcomplex, and RPP21, POP4 and RPP38 form the 'wrist' subcomplex. All subunits of the RNase P complex interact with the catalytic RNA. Several subunits of RNase P are also part of the RNase MRP complex. RNase MRP consists of a catalytic RNA moiety and about 8 protein subunits; POP1, POP7, RPP25, RPP30, RPP38, RPP40 and possibly also POP4 and POP5. POP7 forms a heterodimer with RPP25 that binds to the P3 stem loop of the catalytic RNA.

Its subcellular location is the nucleus. The protein localises to the nucleolus. In terms of biological role, component of ribonuclease P, a ribonucleoprotein complex that generates mature tRNA molecules by cleaving their 5'-ends. Also a component of the MRP ribonuclease complex, which cleaves pre-rRNA sequences. The polypeptide is Ribonuclease P protein subunit p25 (Rpp25) (Rattus norvegicus (Rat)).